Here is a 315-residue protein sequence, read N- to C-terminus: MQIKLANPRGFCAGVDRAIEIVNRALEVFGPPIYVRHEVVHNKFVVEDLRSRGAIFVEELDQVPDDVIVIFSAHGVSQAVRQEAAGRGLKVFDATCPLVTKVHIEVAKYSRDGRECILIGHEGHPEVEGTMGQYDASNGGAIYLVEDEEDVARLQVRDPDNLAFVTQTTLSMDDTSRVIDALRTRFPNIGGPRKDDICYATQNRQDAVKQLAGECDVVLVVGSPNSSNSNRLRELAERMGTPAYLIDGAEDMQRGWFDQAARIGITAGASAPEVLVRGVIDQLKAWGATGAEELDGRPENITFSMPKELRVRSLI.

Cys-12 contacts [4Fe-4S] cluster. Positions 41 and 74 each coordinate (2E)-4-hydroxy-3-methylbut-2-enyl diphosphate. Residues His-41 and His-74 each coordinate dimethylallyl diphosphate. 2 residues coordinate isopentenyl diphosphate: His-41 and His-74. Cys-96 contributes to the [4Fe-4S] cluster binding site. His-124 is a (2E)-4-hydroxy-3-methylbut-2-enyl diphosphate binding site. Dimethylallyl diphosphate is bound at residue His-124. An isopentenyl diphosphate-binding site is contributed by His-124. The active-site Proton donor is the Glu-126. (2E)-4-hydroxy-3-methylbut-2-enyl diphosphate is bound at residue Thr-168. Cys-198 lines the [4Fe-4S] cluster pocket. Ser-226, Ser-227, Asn-228, and Ser-270 together coordinate (2E)-4-hydroxy-3-methylbut-2-enyl diphosphate. Dimethylallyl diphosphate contacts are provided by Ser-226, Ser-227, Asn-228, and Ser-270. Isopentenyl diphosphate contacts are provided by Ser-226, Ser-227, Asn-228, and Ser-270.

Belongs to the IspH family. [4Fe-4S] cluster serves as cofactor.

The catalysed reaction is isopentenyl diphosphate + 2 oxidized [2Fe-2S]-[ferredoxin] + H2O = (2E)-4-hydroxy-3-methylbut-2-enyl diphosphate + 2 reduced [2Fe-2S]-[ferredoxin] + 2 H(+). The enzyme catalyses dimethylallyl diphosphate + 2 oxidized [2Fe-2S]-[ferredoxin] + H2O = (2E)-4-hydroxy-3-methylbut-2-enyl diphosphate + 2 reduced [2Fe-2S]-[ferredoxin] + 2 H(+). It functions in the pathway isoprenoid biosynthesis; dimethylallyl diphosphate biosynthesis; dimethylallyl diphosphate from (2E)-4-hydroxy-3-methylbutenyl diphosphate: step 1/1. The protein operates within isoprenoid biosynthesis; isopentenyl diphosphate biosynthesis via DXP pathway; isopentenyl diphosphate from 1-deoxy-D-xylulose 5-phosphate: step 6/6. Catalyzes the conversion of 1-hydroxy-2-methyl-2-(E)-butenyl 4-diphosphate (HMBPP) into a mixture of isopentenyl diphosphate (IPP) and dimethylallyl diphosphate (DMAPP). Acts in the terminal step of the DOXP/MEP pathway for isoprenoid precursor biosynthesis. This chain is 4-hydroxy-3-methylbut-2-enyl diphosphate reductase, found in Pseudomonas putida (strain W619).